Consider the following 770-residue polypeptide: Arf-GAP with coiled-coil, ANK repeat and PH domain-containing protein 2 (770 aa).

The BAR domain occupies 1-226; the sequence is MKMTVDFEEC…MKDLGAQLDR (226 aa). In terms of domain architecture, PH spans 266–361; it reads GIVMEGYLFK…WIKAVQTSIA (96 aa). A disordered region spans residues 371–391; sequence SEKLDKKSSPSTGSLDSGNES. Polar residues predominate over residues 379–388; it reads SPSTGSLDSG. Residues S384 and S387 each carry the phosphoserine modification. The region spanning 399–520 is the Arf-GAP domain; sequence ESALQRVQCI…KFVDKYSALL (122 aa). The C4-type zinc-finger motif lies at 414–437; sequence CCDCGLADPRWASINLGITLCIEC. A Phosphoserine modification is found at S521. The interval 542–572 is disordered; the sequence is ARASVHTPVKSNDSGIQQCSEDGRESLPSTV. Polar residues predominate over residues 550 to 561; it reads VKSNDSGIQQCS. Residues S573 and S576 each carry the phosphoserine modification. ANK repeat units lie at residues 632–661, 665–694, and 698–727; these read NQATPLIQAVLGGSLVTCEFLLQNGANVNQ, QGRGPLHHATVLGHTGQVCLFLKRGANQHA, and EGKDPLSIAVEAANADIVTLLRLARMNEEM. Residue Y734 is modified to Phosphotyrosine. S767 carries the phosphoserine modification.

As to quaternary structure, interacts with RAB35 (GTP-bound form); the interaction is direct and probably recruits ACAP2 to membranes. Interacts with MICALL1; the interaction is indirect through RAB35.

The protein localises to the endosome membrane. Its subcellular location is the cell membrane. GAP activity stimulated by phosphatidylinositol 4,5-bisphosphate (PIP2) and phosphatidic acid. Functionally, GTPase-activating protein (GAP) for ADP ribosylation factor 6 (ARF6). Doesn't show GAP activity for RAB35. The chain is Arf-GAP with coiled-coil, ANK repeat and PH domain-containing protein 2 (Acap2) from Mus musculus (Mouse).